The primary structure comprises 96 residues: MRLFILLVALFVICACFDKFSLSKDKGTRANLKHPISRRVLRYERSVAYEDFPTPGEMTPKYVPIMDFAKVRPEIPSKTKHNSEFADADYQPDLDF.

Residues 1-15 (MRLFILLVALFVICA) form the signal peptide.

This is an uncharacterized protein from Caenorhabditis elegans.